We begin with the raw amino-acid sequence, 71 residues long: Prophage lysis protein S homolog EssQ (71 aa).

It belongs to the lambda phage S protein family.

The protein is Prophage lysis protein S homolog EssQ (essQ) of Escherichia coli (strain K12).